A 141-amino-acid polypeptide reads, in one-letter code: Hemoglobin subunit alpha-D (141 aa).

The Globin domain occupies 1 to 141 (MLSADEKQLI…VSDVLAEKYR (141 aa)). The heme b site is built by His58 and His87.

This sequence belongs to the globin family. As to quaternary structure, heterotetramer of two alpha-D chains and two beta chains. As to expression, red blood cells.

In terms of biological role, involved in oxygen transport from the lung to the various peripheral tissues. This is Hemoglobin subunit alpha-D (HBAD) from Phrynops hilarii (Snake-necked turtle).